Consider the following 299-residue polypeptide: Bifunctional protein FolD (299 aa).

NADP(+) is bound by residues 168–170, serine 193, and isoleucine 234; that span reads GRS.

It belongs to the tetrahydrofolate dehydrogenase/cyclohydrolase family. Homodimer.

The catalysed reaction is (6R)-5,10-methylene-5,6,7,8-tetrahydrofolate + NADP(+) = (6R)-5,10-methenyltetrahydrofolate + NADPH. It carries out the reaction (6R)-5,10-methenyltetrahydrofolate + H2O = (6R)-10-formyltetrahydrofolate + H(+). It functions in the pathway one-carbon metabolism; tetrahydrofolate interconversion. Catalyzes the oxidation of 5,10-methylenetetrahydrofolate to 5,10-methenyltetrahydrofolate and then the hydrolysis of 5,10-methenyltetrahydrofolate to 10-formyltetrahydrofolate. This chain is Bifunctional protein FolD, found in Rhizobium johnstonii (strain DSM 114642 / LMG 32736 / 3841) (Rhizobium leguminosarum bv. viciae).